The following is a 1035-amino-acid chain: Kinesin-like protein KIN-4A (1035 aa).

Residues 10-369 (CVKVAVHVRP…LKYANRARNI (360 aa)) enclose the Kinesin motor domain. 89–96 (GQTGSGKT) contributes to the ATP binding site. Coiled-coil stretches lie at residues 380–437 (VADE…LRNH) and 498–702 (MLQD…RKSS). Disordered stretches follow at residues 697–720 (EARK…HMTE), 766–787 (VMSG…NTLS), and 882–928 (HSES…PLSP). Polar residues-rich tracts occupy residues 704–716 (RDNS…SPGS) and 778–787 (NGNSRANTLS). Residues 850-904 (NVAADARCQVREKEMEIKEMKEQMTELVTILRHSESRRRETEKQLKQREQAAVTA) are a coiled coil. The segment covering 882-898 (HSESRRRETEKQLKQRE) has biased composition (basic and acidic residues). The segment covering 902–926 (VTATTSPGNGNGSVKHSADDSNTPL) has biased composition (polar residues). The Nuclear localization signal motif lies at 971-987 (KKVSIAGQSGKLWRWKR). The interval 1014–1035 (DETMTRTRPRPQLLPHRPQRVM) is disordered.

The protein belongs to the TRAFAC class myosin-kinesin ATPase superfamily. Kinesin family. KIN-4 subfamily. As to quaternary structure, homodimer. Expressed in young tissues with cell divisions, including initiating adventitious roots, primary root tips, flower primordia, intercalary meristems, sub-epidermal regions of young culms and panicles.

The protein localises to the nucleus. The protein resides in the cytoplasm. Its subcellular location is the cytoskeleton. Its activity is regulated as follows. May be regulated by cyclin-dependent kinase A. Microtubule-dependent motor protein involved in the control of the oriented deposition of cellulose microfibrils. Involved in wall biogenesis and modification, and contributes to cell-cycle progression and cell division. Acts as a transcriptional activator in gibberellic acid (GA) biosynthesis pathway. Binds specifically to the DNA sequence 5'-ACCAACTTGAA-3' of the ent-kaurene oxidase 2 (CYP701A6 or OsKO2) promoter. May regulate CYP701A6 gene expression and mediates cell elongation by regulating the GA biosynthesis pathway. This Oryza sativa subsp. japonica (Rice) protein is Kinesin-like protein KIN-4A.